The primary structure comprises 566 residues: Proline--tRNA ligase (566 aa).

This sequence belongs to the class-II aminoacyl-tRNA synthetase family. ProS type 1 subfamily. Homodimer.

The protein resides in the cytoplasm. It catalyses the reaction tRNA(Pro) + L-proline + ATP = L-prolyl-tRNA(Pro) + AMP + diphosphate. In terms of biological role, catalyzes the attachment of proline to tRNA(Pro) in a two-step reaction: proline is first activated by ATP to form Pro-AMP and then transferred to the acceptor end of tRNA(Pro). As ProRS can inadvertently accommodate and process non-cognate amino acids such as alanine and cysteine, to avoid such errors it has two additional distinct editing activities against alanine. One activity is designated as 'pretransfer' editing and involves the tRNA(Pro)-independent hydrolysis of activated Ala-AMP. The other activity is designated 'posttransfer' editing and involves deacylation of mischarged Ala-tRNA(Pro). The misacylated Cys-tRNA(Pro) is not edited by ProRS. The chain is Proline--tRNA ligase from Coxiella burnetii (strain RSA 493 / Nine Mile phase I).